Reading from the N-terminus, the 184-residue chain is Photosystem I assembly protein Ycf4 (184 aa).

Transmembrane regions (helical) follow at residues 22–42 and 57–77; these read FFWA…GTSS and IIFF…LFIS.

Belongs to the Ycf4 family.

The protein localises to the plastid. Its subcellular location is the chloroplast thylakoid membrane. In terms of biological role, seems to be required for the assembly of the photosystem I complex. This is Photosystem I assembly protein Ycf4 from Aethionema cordifolium (Lebanon stonecress).